A 65-amino-acid polypeptide reads, in one-letter code: Myotoxin-1 (65 aa).

The first 22 residues, 1-22, serve as a signal peptide directing secretion; it reads MKILYLLFAFLFLAFLSEPGNA. 3 disulfide bridges follow: C26/C58, C33/C52, and C40/C59.

Belongs to the crotamine-myotoxin family. Monomer. As to expression, expressed by the venom gland.

It localises to the secreted. Functionally, cationic peptide that possesses multiple functions. It acts as a cell-penetrating peptide (CPP), and as a potent voltage-gated potassium channel (Kv) inhibitor. It exhibits antimicrobial activities, hind limb paralysis, and severe muscle necrosis by a non-enzymatic mechanism. The sequence is that of Myotoxin-1 from Crotalus durissus terrificus (South American rattlesnake).